Here is a 365-residue protein sequence, read N- to C-terminus: Eukaryotic translation initiation factor 3 subunit H (365 aa).

Residues 11 to 160 form the MPN domain; sequence VKVEALVVMK…LRAFRLSPKF (150 aa).

Belongs to the eIF-3 subunit H family. As to quaternary structure, component of the eukaryotic translation initiation factor 3 (eIF-3) complex.

It localises to the cytoplasm. Component of the eukaryotic translation initiation factor 3 (eIF-3) complex, which is involved in protein synthesis of a specialized repertoire of mRNAs and, together with other initiation factors, stimulates binding of mRNA and methionyl-tRNAi to the 40S ribosome. The eIF-3 complex specifically targets and initiates translation of a subset of mRNAs involved in cell proliferation. In Aspergillus terreus (strain NIH 2624 / FGSC A1156), this protein is Eukaryotic translation initiation factor 3 subunit H.